Reading from the N-terminus, the 393-residue chain is Ubiquitin-like modifier-activating enzyme 5 (393 aa).

Positions 75, 96, 119, 142, and 175 each coordinate ATP. 2 residues coordinate Zn(2+): Cys-217 and Cys-220. Cys-241 functions as the Glycyl thioester intermediate in the catalytic mechanism. Residues Cys-294 and Cys-299 each coordinate Zn(2+).

It belongs to the ubiquitin-activating E1 family. UBA5 subfamily.

E1-like enzyme which activates UFM1. The chain is Ubiquitin-like modifier-activating enzyme 5 from Bombyx mori (Silk moth).